A 701-amino-acid chain; its full sequence is Elongation factor G (701 aa).

Residues 8 to 290 form the tr-type G domain; it reads SRYRNIGISA…AVIEYLPAPT (283 aa). Residues 17-24, 88-92, and 142-145 contribute to the GTP site; these read AHIDAGKT, DTPGH, and NKMD.

Belongs to the TRAFAC class translation factor GTPase superfamily. Classic translation factor GTPase family. EF-G/EF-2 subfamily.

It localises to the cytoplasm. Its function is as follows. Catalyzes the GTP-dependent ribosomal translocation step during translation elongation. During this step, the ribosome changes from the pre-translocational (PRE) to the post-translocational (POST) state as the newly formed A-site-bound peptidyl-tRNA and P-site-bound deacylated tRNA move to the P and E sites, respectively. Catalyzes the coordinated movement of the two tRNA molecules, the mRNA and conformational changes in the ribosome. In Actinobacillus pleuropneumoniae serotype 5b (strain L20), this protein is Elongation factor G.